A 145-amino-acid polypeptide reads, in one-letter code: Ribonuclease VapC24 (145 aa).

The 120-residue stretch at 4–123 (IDTNILLYAQ…RHHGVDEFAT (120 aa)) folds into the PINc domain. The Mg(2+) site is built by Asp-5 and Asp-106.

The protein belongs to the PINc/VapC protein family. Mg(2+) is required as a cofactor.

Its function is as follows. Toxic component of a type II toxin-antitoxin (TA) system. An RNase. Its cognate antitoxin is VapB24. This is Ribonuclease VapC24 from Mycobacterium tuberculosis (strain CDC 1551 / Oshkosh).